The sequence spans 281 residues: Cell growth regulator with EF hand domain protein 1 (281 aa).

The N-terminal stretch at Met-1–Ala-21 is a signal peptide. EF-hand domains follow at residues Asn-71–Pro-106 and Pro-115–Arg-150. Positions 84, 86, 88, 90, 95, 128, 130, 132, and 139 each coordinate Ca(2+). A disordered region spans residues Glu-146–Ile-281. The span at Leu-169–Gly-184 shows a compositional bias: polar residues. A compositionally biased stretch (basic and acidic residues) spans Thr-185–Val-213. Phosphoserine is present on residues Ser-217 and Ser-228. Over residues Gly-234–Pro-256 the composition is skewed to basic and acidic residues.

In terms of processing, probably digested extracellularly by an unknown serine protease generating extremely hydrophobic bioactive peptides. Expressed predominantly in whole brain and kidney, with limited expression in heart, lung, liver, and skeletal muscle and no expression in spleen and testis. Also expressed in pituitary gland, adrenal gland, digestive tract, and reproductive organs.

It localises to the secreted. In terms of biological role, mediates cell-cell adhesion in a calcium-dependent manner. Able to inhibit growth in several cell lines. This is Cell growth regulator with EF hand domain protein 1 from Rattus norvegicus (Rat).